Reading from the N-terminus, the 592-residue chain is Condensin-2 complex subunit H2 (592 aa).

Disordered stretches follow at residues 89 to 116 (NKKR…DGCE) and 261 to 285 (EAPS…PKQL). Residues 96 to 108 (GSSSDGNQEQAPS) show a composition bias toward polar residues.

The protein belongs to the CND2 H2 (condensin-2 subunit 2) family. Component of the condensin-2 complex, which contains the smc2 and smc4 heterodimer, and three non SMC subunits, ncapg2, ncaph2 and ncapd3 that probably regulate the complex.

It is found in the nucleus. Regulatory subunit of the condensin-2 complex, a complex that seems to provide chromosomes with an additional level of organization and rigidity and in establishing mitotic chromosome architecture. In Danio rerio (Zebrafish), this protein is Condensin-2 complex subunit H2 (ncaph2).